Reading from the N-terminus, the 618-residue chain is MSQQPSGQGISEKIQNLASKYGQMLNELDKAVVGRYDSKTAVLLGLMTGFPTLLVGDRGVAKTMLIELLPKVIEGLNDKDVFVVQVSEYTDPSEIFGVPDIQKLVNGEGFDLKTDGFLPSAKVAFIDEIFYTSEKVRSTLLRAINEKKINVFGKEIKLPWIAFYAAANKVDLENPSDLALLDRFNIRGFILDIPFIMDNVDKLADETMQVMSASENPELKKVITLNDVEETRKVLDQMVRDFFNSKEALDLLKKVYYVIGDILASLKDTDAYESFYRSADEDYTHISTRARKRLNYVAASIALVRGATKPTYLDYLLALLFTLPVDVQSFKIVRDKIRDEWNKAVSGQEDTDATKVILDYLNDRLLTEAFIKASKMFDTSRNAIENLGKKIPLAQPFENREPTLVSSLPKIVEFLTRPEPISYSIWLMTKDKNGKINVGREKTGELSGNPLQKLEELLKLLESYRKVLDEADSPEERKTLILGLSKLVVNFGSTSSYQNGYKVPFLTLLDAISLFINNLKSTDVQKVIEQVVNDAKNNALKSISNGAPEVSGWEVFAPLLEQYGMKVPGILEAKRQIEDRAKGLSKNLDNTVTEIMNAGEKIMEMDDEMTKTFISLAS.

A coiled-coil region spans residues 570–598 (ILEAKRQIEDRAKGLSKNLDNTVTEIMNA).

Its subcellular location is the virion. This chain is Structural protein ORF618, found in Acidianus two-tailed virus (ATV).